We begin with the raw amino-acid sequence, 469 residues long: Glutamine synthetase (469 aa).

Residues 15 to 96 (NDVKFIDVRF…INFFIHDPIT (82 aa)) enclose the GS beta-grasp domain. The region spanning 104–469 (PRNIAKKAEA…PHEFELYFDI (366 aa)) is the GS catalytic domain. 2 residues coordinate Mg(2+): Glu-129 and Glu-131. An ATP-binding site is contributed by Glu-205. Residues Glu-210 and Glu-218 each coordinate Mg(2+). 221-223 (YKF) contributes to the ATP binding site. Residues 262 to 263 (NG) and Gly-263 each bind L-glutamate. His-267 lines the Mg(2+) pocket. Residues 269 to 271 (HQS) and Ser-271 contribute to the ATP site. 3 residues coordinate L-glutamate: Arg-320, Glu-326, and Arg-338. ATP contacts are provided by Arg-338, Arg-343, and Lys-352. Glu-357 provides a ligand contact to Mg(2+). Arg-359 contributes to the L-glutamate binding site. Tyr-397 is subject to O-AMP-tyrosine.

Belongs to the glutamine synthetase family. In terms of assembly, oligomer of 12 subunits arranged in the form of two hexagons. It depends on Mg(2+) as a cofactor.

The protein resides in the cytoplasm. It carries out the reaction L-glutamate + NH4(+) + ATP = L-glutamine + ADP + phosphate + H(+). The activity of this enzyme could be controlled by adenylation under conditions of abundant glutamine. In terms of biological role, catalyzes the ATP-dependent biosynthesis of glutamine from glutamate and ammonia. This chain is Glutamine synthetase, found in Streptomyces filamentosus (Streptomyces roseosporus).